A 130-amino-acid chain; its full sequence is Small ribosomal subunit protein uS9 (130 aa).

It belongs to the universal ribosomal protein uS9 family.

The polypeptide is Small ribosomal subunit protein uS9 (Burkholderia ambifaria (strain MC40-6)).